The sequence spans 246 residues: Serine protease 1 (246 aa).

An N-terminal signal peptide occupies residues 1–15; that stretch reads MKTFIFLALLGATVA. The propeptide at 16-23 is activation peptide; sequence FPIDDDDK. Residues 24–244 enclose the Peptidase S1 domain; that stretch reads IVGGYTCSRN…YVSWIQQTIA (221 aa). 6 cysteine pairs are disulfide-bonded: cysteine 30-cysteine 160, cysteine 48-cysteine 64, cysteine 132-cysteine 233, cysteine 139-cysteine 206, cysteine 171-cysteine 185, and cysteine 196-cysteine 220. The active-site Charge relay system is the histidine 63. Ca(2+)-binding residues include glutamate 75, asparagine 77, valine 80, and glutamate 85. Aspartate 107 functions as the Charge relay system in the catalytic mechanism. Serine 200 functions as the Charge relay system in the catalytic mechanism.

It belongs to the peptidase S1 family. In terms of assembly, interacts with SERPINA1. The cofactor is Ca(2+).

The protein localises to the secreted. It localises to the extracellular space. It carries out the reaction Preferential cleavage: Arg-|-Xaa, Lys-|-Xaa.. This Canis lupus familiaris (Dog) protein is Serine protease 1.